A 395-amino-acid polypeptide reads, in one-letter code: FAD-dependent urate hydroxylase (395 aa).

FAD is bound by residues Gly-11, Glu-30 to Arg-31, Ser-43, and Met-125. Residues Asn-180, Arg-206, and Tyr-218–Phe-220 contribute to the substrate site. FAD is bound by residues Asp-287 and Gly-297–Cys-301.

Belongs to the FAD-dependent urate hydroxylase family. In terms of assembly, monomer. FAD serves as cofactor.

It carries out the reaction urate + NADH + O2 + H(+) = 5-hydroxyisourate + NAD(+) + H2O. It participates in purine metabolism; urate degradation. Functionally, catalyzes the hydroxylation of urate to 5-hydroxyisourate (HIU). Is likely to be involved in the urate degradation pathway to allantoin. Prefers NADH over NADPH as the electron donor. In Mycolicibacterium vanbaalenii (strain DSM 7251 / JCM 13017 / BCRC 16820 / KCTC 9966 / NRRL B-24157 / PYR-1) (Mycobacterium vanbaalenii), this protein is FAD-dependent urate hydroxylase.